A 106-amino-acid chain; its full sequence is uncharacterized protein (106 aa).

The protein belongs to the csb family.

This is an uncharacterized protein from Dictyostelium discoideum (Social amoeba).